The following is a 493-amino-acid chain: Xaa-Pro dipeptidase (493 aa).

Ala-2 is modified (N-acetylalanine). Residue Ser-167 is modified to Phosphoserine. His-255 contributes to the a dipeptide binding site. Asp-276, Asp-287, and His-370 together coordinate Mn(2+). Asp-287 is a binding site for a dipeptide. The a dipeptide site is built by His-377 and Arg-398. Residues Glu-412 and Glu-452 each coordinate Mn(2+).

It belongs to the peptidase M24B family. Eukaryotic-type prolidase subfamily. Homodimer. Requires Mn(2+) as cofactor.

It catalyses the reaction Xaa-L-Pro dipeptide + H2O = an L-alpha-amino acid + L-proline. In terms of biological role, dipeptidase that catalyzes the hydrolysis of dipeptides with a prolyl (Xaa-Pro) or hydroxyprolyl residue in the C-terminal position. The preferred dipeptide substrate is Gly-Pro, but other Xaa-Pro dipeptides, such as Ala-Pro, Met-Pro, Phe-Pro, Val-Pro and Leu-Pro, can be cleaved. Plays an important role in collagen metabolism because the high level of iminoacids in collagen. This chain is Xaa-Pro dipeptidase (PEPD), found in Pongo abelii (Sumatran orangutan).